Consider the following 255-residue polypeptide: Acetylglutamate kinase (255 aa).

Substrate contacts are provided by residues 40-41 (GG), Arg-62, and Asn-153.

Belongs to the acetylglutamate kinase family. ArgB subfamily.

It is found in the cytoplasm. The catalysed reaction is N-acetyl-L-glutamate + ATP = N-acetyl-L-glutamyl 5-phosphate + ADP. It functions in the pathway amino-acid biosynthesis; L-arginine biosynthesis; N(2)-acetyl-L-ornithine from L-glutamate: step 2/4. In terms of biological role, catalyzes the ATP-dependent phosphorylation of N-acetyl-L-glutamate. This chain is Acetylglutamate kinase, found in Bacillus cereus (strain AH187).